The chain runs to 264 residues: ATP synthase subunit b 1 (264 aa).

Residues 2–22 form a helical membrane-spanning segment; sequence LFDWFTFWAQLLNFLILVWLL. The disordered stretch occupies residues 240-264; it reads ASSALLDGPDDEMNEEEGHAGKDAD. A compositionally biased stretch (basic and acidic residues) spans 255–264; the sequence is EEGHAGKDAD.

This sequence belongs to the ATPase B chain family. As to quaternary structure, F-type ATPases have 2 components, F(1) - the catalytic core - and F(0) - the membrane proton channel. F(1) has five subunits: alpha(3), beta(3), gamma(1), delta(1), epsilon(1). F(0) has four main subunits: a(1), b(2) and c(10-14). The alpha and beta chains form an alternating ring which encloses part of the gamma chain. F(1) is attached to F(0) by a central stalk formed by the gamma and epsilon chains, while a peripheral stalk is formed by the delta and b chains.

It localises to the cell inner membrane. Functionally, f(1)F(0) ATP synthase produces ATP from ADP in the presence of a proton or sodium gradient. F-type ATPases consist of two structural domains, F(1) containing the extramembraneous catalytic core and F(0) containing the membrane proton channel, linked together by a central stalk and a peripheral stalk. During catalysis, ATP synthesis in the catalytic domain of F(1) is coupled via a rotary mechanism of the central stalk subunits to proton translocation. Component of the F(0) channel, it forms part of the peripheral stalk, linking F(1) to F(0). This is ATP synthase subunit b 1 from Chlorobium luteolum (strain DSM 273 / BCRC 81028 / 2530) (Pelodictyon luteolum).